The sequence spans 860 residues: Glucans biosynthesis glucosyltransferase H (860 aa).

The next 6 helical transmembrane spans lie at 141–161 (FILL…MKGI), 187–207 (VLPY…FCWV), 515–535 (VFLT…FLVL), 572–592 (LFST…MLIW), 599–619 (FGGV…SVLL), and 682–702 (FLWW…VSVI).

The protein belongs to the glycosyltransferase 2 family. OpgH subfamily.

It is found in the cell inner membrane. It functions in the pathway glycan metabolism; osmoregulated periplasmic glucan (OPG) biosynthesis. Functionally, involved in the biosynthesis of osmoregulated periplasmic glucans (OPGs). This Pseudomonas paraeruginosa (strain DSM 24068 / PA7) (Pseudomonas aeruginosa (strain PA7)) protein is Glucans biosynthesis glucosyltransferase H.